Consider the following 983-residue polypeptide: MRIFSFLFLLLLGILTGQGLVSGTDNGKTTDVTWDKYSLSVKGQRLFVFSGEFHYQRLPVPELWLDVFQKLRANGFNAISVYFFWSFHSASEGEFDFENGAHDIQRLFDYAKEAGLYVIARAGPYCNAETSAGGFALWAANGQMGNERTSDEAYYEKWRPWILEVGKIIAKNQITNGGPVILNQHENELTETTYDPNHTLVVYMKQIAQVFEEAGIVVPSSHNEKGMRGVSWSTDYHNVGGAVNIYGLDSYPGGLSCTNPNSGFRLVRTYYQWFQNYSSTQPSYMPEFEGGWFQPWGGSFYDTCATELSPEFPDVYYKNNIGSRVTLHSIYMTYGGTNWGHSAAPVVYTSYDYAAPLRETREIRDKLKQTKLIGLFTRVSTDLLKTYMEGNGTGYTSDSSIYTWSLRNPDTNAGFYVLAHSTSSARDVTTFSLNATTSAGAISIPDIELNGRQSKIIVTDYNFGTNSTLLFSSAEVLTYANLDVNVLVFYLNVGQKGTFALKDEPKLAFQTYGNSNVTTSESSYGTQYSYTQGEGVTAVKFSNGVLAYLLDKESAWNFFAPPTTSSPQVAPNEHILVQGPYLVRGASINHGTVEITGDNANTTSIEVYTGNSQVKKVKWNGKTIETRKTAYGSLIGTVPGAEDVKIRLPSLDSWKAQDTLPEIQPDYDDSTWTVCNKTTSVNAIAPLSLPVLYSGDYGYHAGTKVYRGRFDGRNVTGANVTVQNGAAAGWAAWVNGQYAGGSAGSPSLAATSAVLTFNGLSLKDRDNVLTVVTDYTGHDQNSVRPKGTQNPRGILGATLTGGGNFTSWRIQGNAGGEKNIDPVRGPMNEGGLYGERMGWHLPGYKVPKSASKSSPLDGVSGAEGRFYTTTFKLKLDKDLDVPIGLQLGAPEGTKAVVQVFMNGYQFGHYLPHTGPQSLFPFPPGVINNRGENTLAISMWALTDAGAKLDKVELVAYGKYRSGFDFNQDWGYLQPGWKDRSQYA.

Residues 1 to 23 form the signal peptide; sequence MRIFSFLFLLLLGILTGQGLVSG. Substrate is bound by residues Tyr-82, Asn-127, Ala-128, Glu-129, and Asn-187. Residue Glu-188 is the Proton donor of the active site. N-linked (GlcNAc...) asparagine glycosylation is present at Asn-197. Residue Tyr-251 participates in substrate binding. The cysteines at positions 257 and 304 are disulfide-linked. Asn-276 is a glycosylation site (N-linked (GlcNAc...) asparagine). Glu-287 serves as the catalytic Nucleophile. Residue Tyr-353 coordinates substrate. N-linked (GlcNAc...) asparagine glycosylation is found at Asn-391, Asn-434, Asn-466, Asn-516, Asn-601, Asn-676, Asn-714, Asn-719, and Asn-804.

This sequence belongs to the glycosyl hydrolase 35 family.

It localises to the secreted. It catalyses the reaction Hydrolysis of terminal non-reducing beta-D-galactose residues in beta-D-galactosides.. Cleaves beta-linked terminal galactosyl residues from gangliosides, glycoproteins, and glycosaminoglycans. This chain is Probable beta-galactosidase C (lacC), found in Neosartorya fischeri (strain ATCC 1020 / DSM 3700 / CBS 544.65 / FGSC A1164 / JCM 1740 / NRRL 181 / WB 181) (Aspergillus fischerianus).